We begin with the raw amino-acid sequence, 201 residues long: Iron-sulfur flavoprotein AF_1896 (201 aa).

Residues cysteine 46, cysteine 49, cysteine 52, and cysteine 57 each coordinate [4Fe-4S] cluster.

This sequence belongs to the SsuE family. Isf subfamily. Homodimer. FMN serves as cofactor. It depends on [4Fe-4S] cluster as a cofactor.

Redox-active protein probably involved in electron transport. The chain is Iron-sulfur flavoprotein AF_1896 from Archaeoglobus fulgidus (strain ATCC 49558 / DSM 4304 / JCM 9628 / NBRC 100126 / VC-16).